A 255-amino-acid polypeptide reads, in one-letter code: Ribonuclease HII (255 aa).

The region spanning 72-255 (AIICGIDEVG…KSFEPIKSLL (184 aa)) is the RNase H type-2 domain. Residues aspartate 78, glutamate 79, and aspartate 170 each contribute to the a divalent metal cation site.

Belongs to the RNase HII family. It depends on Mn(2+) as a cofactor. Requires Mg(2+) as cofactor.

The protein resides in the cytoplasm. The enzyme catalyses Endonucleolytic cleavage to 5'-phosphomonoester.. Functionally, endonuclease that specifically degrades the RNA of RNA-DNA hybrids. This Staphylococcus aureus (strain USA300) protein is Ribonuclease HII.